A 98-amino-acid chain; its full sequence is MYEYLLLTRKNALFSLAINEPSPTFALTIIAIFSSTNVRSSVVRLGCFRVEICCTCHTQYLKLEIMVIISYLKYVNLPCSFIFISNSFALVFKISAEV.

Helical transmembrane passes span 13–33 and 65–85; these read LFSLAINEPSPTFALTIIAIF and IMVIISYLKYVNLPCSFIFIS.

The protein localises to the membrane. This is an uncharacterized protein from Saccharomyces cerevisiae (strain ATCC 204508 / S288c) (Baker's yeast).